Consider the following 245-residue polypeptide: Small ribosomal subunit protein uS2 (245 aa).

This sequence belongs to the universal ribosomal protein uS2 family.

The sequence is that of Small ribosomal subunit protein uS2 from Pseudomonas putida (strain GB-1).